Here is a 507-residue protein sequence, read N- to C-terminus: MFS transporter fsa7 (507 aa).

The tract at residues 1–65 (MATKDPAVTT…PDDPEHPLNW (65 aa)) is disordered. Asn-64 is a glycosylation site (N-linked (GlcNAc...) asparagine). Residues 72–92 (LHLVIVSLFTLAANLAATMFA) form a helical membrane-spanning segment. The N-linked (GlcNAc...) asparagine glycan is linked to Asn-106. Transmembrane regions (helical) follow at residues 111–131 (AMTV…LAPL), 146–166 (FVYI…MFLV), 169–189 (IICG…VADL), 200–220 (ALFT…GGFV), and 228–248 (WTFR…VIFM). Asn-252 is a glycosylation site (N-linked (GlcNAc...) asparagine). A run of 6 helical transmembrane segments spans residues 302-322 (PIVL…FLLF), 341-361 (GLAY…FSVL), 379-399 (LILM…YGWT), 406-426 (WIVP…VVIP), 429-449 (IYLV…ANLL), and 472-492 (GWGN…PWFF).

The protein belongs to the major facilitator superfamily.

The protein resides in the cell membrane. In terms of biological role, efflux pump that might be required for efficient secretion of fusarisetin A or other secondary metabolies produced by the fusarisetin A gene cluster. The polypeptide is MFS transporter fsa7 (Fusarium sp. (strain FN080326)).